Here is a 208-residue protein sequence, read N- to C-terminus: MRAVIPYKKAGAKSRLSPVLSLQEREEFVELMLNQVISSLKGAGIEQVDILSPSVYGLEEMTEARVLLDEKDLNEALNRYLKEAEEPVLIVMADLPLLSPEHIKEISSTEKDVCIVPGKGGGTNALFIKNPSKYRVKYYGSSFLTHCSIATDSGQDFEIYDSFMAGTDIDEPEDLVELLIHGKGAAKDYIESKFRLEVKKGRVGLVPL.

It belongs to the CofC family. Homodimer.

It carries out the reaction (2S)-2-phospholactate + GTP + H(+) = (2S)-lactyl-2-diphospho-5'-guanosine + diphosphate. It functions in the pathway cofactor biosynthesis; coenzyme F420 biosynthesis. Guanylyltransferase that catalyzes the activation of (2S)-2-phospholactate (2-PL) as (2S)-lactyl-2-diphospho-5'-guanosine, via the condensation of 2-PL with GTP. It is involved in the biosynthesis of coenzyme F420, a hydride carrier cofactor. This Methanosarcina mazei (strain ATCC BAA-159 / DSM 3647 / Goe1 / Go1 / JCM 11833 / OCM 88) (Methanosarcina frisia) protein is 2-phospho-L-lactate guanylyltransferase.